A 65-amino-acid polypeptide reads, in one-letter code: MGTVKPAYIKVIARELLKKYPEVFTGNFDENKRLVAELTNIQSKTVRNRVAGYITRRVNRGLVNV.

It belongs to the eukaryotic ribosomal protein eS17 family.

This chain is Small ribosomal subunit protein eS17, found in Archaeoglobus fulgidus (strain ATCC 49558 / DSM 4304 / JCM 9628 / NBRC 100126 / VC-16).